The sequence spans 330 residues: Olfactory receptor 5T9 (330 aa).

At 1 to 37 (MSIHSPGYTVRRIPVNNVTDTTMFILTGFTDDADLQV) the chain is on the extracellular side. The N-linked (GlcNAc...) asparagine glycan is linked to N17. The helical transmembrane segment at 38–58 (LLFLLFFVIYLFTLIGNLGLV) threads the bilayer. Over 59–66 (LLVIGDSR) the chain is Cytoplasmic. Residues 67–87 (LHNPMYYFLSVLSFLDACYST) form a helical membrane-spanning segment. The Extracellular segment spans residues 88–111 (VVTPKMLVNFISNDKSISYPGCVT). C109 and C201 are oxidised to a cystine. A helical membrane pass occupies residues 112 to 132 (EMFLFVTFGTTECFLLAAMAY). Residues 133–145 (DRFVAIYNPLLYA) are Cytoplasmic-facing. Residues 146-166 (VKMSPRVYIPLIIACYSGGIM) form a helical membrane-spanning segment. Residues 167 to 208 (HATIHTVATFSLSFCASNEIRHVFCDIPPLLAISCSNTNINQ) lie on the Extracellular side of the membrane. The helical transmembrane segment at 209–229 (LLLFYCVGSIEIITILIVLVS) threads the bilayer. Over 230 to 249 (YSFILFAILKMNSAEGRRKI) the chain is Cytoplasmic. Residues 250–270 (FSTCGSHLTGVSIYHGTILFM) traverse the membrane as a helical segment. Over 271-283 (YVRPSSNYALEHD) the chain is Extracellular. Residues 284-304 (MIVSTFYTIVIPMLNPIIYSL) traverse the membrane as a helical segment. At 305 to 330 (RNKDVKEAMKKIFERNFFMNKVHFKL) the chain is on the cytoplasmic side.

The protein belongs to the G-protein coupled receptor 1 family.

The protein resides in the cell membrane. Its function is as follows. Potential odorant receptor. The protein is Olfactory receptor 5T9 of Mus musculus (Mouse).